Consider the following 567-residue polypeptide: MRLSQFHLHTTKETPSDAELTSHRLMLRAGMIRKLASGLYTWSPLGLRVLRKVERIVREEMDRAGAVEFQIPTIQPKELWEQTGRWQKFGPQLLKIKDRKDQTFCYSPTAEEAACDFARSELSSYKQLPVNFYQIQTKFRDEIRPRFGVMRSREFLMKDAYSFHLHDECLVREYENMKSAYSRIFTRLGLDFRMVQADSGAIGGDASQEFHVIADSGEDALVFSTGSDYAANMEAAIAADPAPRAAASEAMRKVDTPTQKTCEDVAALLGINLQRTVKSVALIAGEGEAQQFVLVLVRGDHEVNEIKLAKVAGLDEQRFASEAEIAEHLGSVPGFLGPIAPAKAIRVVADREVAAMSDFVVGANEAGFHLAGVNWGRDLAEPEVADIRNVRAGDRALDGGELKIARGIEVGHVFQLGRTYARALDATVLDENGKAAVMAMGCYGIGISRVVAAAIEQNHDDAGIIWPDAMAPWQVVVCVINPKGDAAVADAATNLLQELRDAGLDAALDDRGLRPGAMFADMELIGIPHRVVVSERGLAAGTYEYRSRRASEAESLDKATLLQRLQG.

This sequence belongs to the class-II aminoacyl-tRNA synthetase family. ProS type 1 subfamily. In terms of assembly, homodimer.

The protein localises to the cytoplasm. The catalysed reaction is tRNA(Pro) + L-proline + ATP = L-prolyl-tRNA(Pro) + AMP + diphosphate. Its function is as follows. Catalyzes the attachment of proline to tRNA(Pro) in a two-step reaction: proline is first activated by ATP to form Pro-AMP and then transferred to the acceptor end of tRNA(Pro). As ProRS can inadvertently accommodate and process non-cognate amino acids such as alanine and cysteine, to avoid such errors it has two additional distinct editing activities against alanine. One activity is designated as 'pretransfer' editing and involves the tRNA(Pro)-independent hydrolysis of activated Ala-AMP. The other activity is designated 'posttransfer' editing and involves deacylation of mischarged Ala-tRNA(Pro). The misacylated Cys-tRNA(Pro) is not edited by ProRS. The protein is Proline--tRNA ligase of Stenotrophomonas maltophilia (strain R551-3).